Consider the following 438-residue polypeptide: MDVEIQDTPGKISISKRSILSGTVENIDYPHYCDLLRKMNMPFVKGLENRHNYGRFEKKCNPAFLKFHPYPPSVLPDYHLHDPYPPPYGPHYPLFPLRDDVTLGDSCSGFMSPGGDADLNPGIGRTIPTLVDFSDVKPQHRVPRPDTGFQTTIKRQKILSEELQQNRRWNSREVPDISIRARLGGWTSPLKVTPLQPHHEGRSLSHIFTFDEEATCTDEGEPLVQTNKKCNAKDSFYKSSTQKAYEDVPWDKMLPPKLVPEETTLEKTADPISQCFTLKRYKGVPAITQMVGELWDRFQTRSFLAPVKPINFVSSSSRSKYIPLYTGHVQSTNADDVDNPLGDIASLAKQRYSKPLYTNTSRAANIPGYTGKVHFTATHPANSNIPSTTPSPDSELHRVFQKEMAVDLFRHQAPLSRLVTTVRPYNPFNKKDKETIDY.

In terms of tissue distribution, testis-specific.

Functionally, essential for normal spermatogenesis. The chain is Protein SPMIP7 from Homo sapiens (Human).